The sequence spans 1713 residues: Serine/threonine-protein kinase MRCK beta (1713 aa).

The region spanning F76–F342 is the Protein kinase domain. Residues I82–V90 and K105 contribute to the ATP site. D200 functions as the Proton acceptor in the catalytic mechanism. Phosphoserine; by autocatalysis occurs at positions 221 and 233. Residue T239 is modified to Phosphothreonine; by autocatalysis. One can recognise an AGC-kinase C-terminal domain in the interval E343 to G413. Residue T423 is modified to Phosphothreonine. The stretch at L434–H649 forms a coiled coil. The segment at L461–K485 is disordered. Residues E463–S481 show a composition bias toward polar residues. At R671 the chain carries Omega-N-methylarginine. 2 coiled-coil regions span residues Q681–E815 and A882–D939. S927 is subject to Phosphoserine. At Y954 the chain carries Phosphotyrosine. 2 stretches are compositionally biased toward polar residues: residues A971–E994 and R1001–T1014. Positions A971 to T1014 are disordered. The Phorbol-ester/DAG-type zinc finger occupies A1026 to C1076. Residues G1096–A1215 enclose the PH domain. The 275-residue stretch at I1241–N1515 folds into the CNH domain. Positions I1585–G1598 constitute a CRIB domain. Positions P1615 to A1713 are disordered. Residues D1666–K1677 are compositionally biased toward basic and acidic residues. S1682, S1684, S1688, S1692, and S1695 each carry phosphoserine.

The protein belongs to the protein kinase superfamily. AGC Ser/Thr protein kinase family. DMPK subfamily. Homodimer and homotetramer via the coiled coil regions. Interacts tightly with GTP-bound but not GDP-bound CDC42. Interacts with TJP1; this interaction requires the presence of catalytically active CDC42. Forms a tripartite complex with MYO18A and LURAP1 with the latter acting as an adapter connecting CDC42BPB and MYO18A. LURAP1 binding results in activation of CDC42BPB by abolition of its negative autoregulation. Interacts with STRIP1, STRN3 and SIKE1. Interacts with CPNE4 (via VWFA domain). Interacts with LURAP1. Interacts (via AGC-kinase C-terminal domain) with FAM89B/LRAP25 (via LRR repeat). Forms a tripartite complex with FAM89B/LRAP25 and LIMK1. Mg(2+) serves as cofactor. In terms of processing, proteolytically cleaved by caspases upon apoptosis induction. In terms of tissue distribution, expressed in all tissues examined with highest levels in lung and kidney.

The protein localises to the cytoplasm. Its subcellular location is the cell membrane. It localises to the cell junction. The protein resides in the cell projection. It is found in the lamellipodium. It carries out the reaction L-seryl-[protein] + ATP = O-phospho-L-seryl-[protein] + ADP + H(+). The enzyme catalyses L-threonyl-[protein] + ATP = O-phospho-L-threonyl-[protein] + ADP + H(+). With respect to regulation, maintained in an inactive, closed conformation by an interaction between the kinase domain and the negative autoregulatory C-terminal coiled-coil region. Agonist binding to the phorbol ester binding site disrupts this, releasing the kinase domain to allow N-terminus-mediated dimerization and kinase activation by transautophosphorylation. Inhibited by chelerythrine chloride. Serine/threonine-protein kinase which is an important downstream effector of CDC42 and plays a role in the regulation of cytoskeleton reorganization and cell migration. Regulates actin cytoskeletal reorganization via phosphorylation of PPP1R12C and MYL9/MLC2. In concert with MYO18A and LURAP1, is involved in modulating lamellar actomyosin retrograde flow that is crucial to cell protrusion and migration. Phosphorylates PPP1R12A. In concert with FAM89B/LRAP25 mediates the targeting of LIMK1 to the lamellipodium resulting in its activation and subsequent phosphorylation of CFL1 which is important for lamellipodial F-actin regulation. This chain is Serine/threonine-protein kinase MRCK beta, found in Rattus norvegicus (Rat).